The sequence spans 136 residues: Transcription antitermination protein NusB (136 aa).

It belongs to the NusB family.

Its function is as follows. Involved in transcription antitermination. Required for transcription of ribosomal RNA (rRNA) genes. Binds specifically to the boxA antiterminator sequence of the ribosomal RNA (rrn) operons. In Paenarthrobacter aurescens (strain TC1), this protein is Transcription antitermination protein NusB.